Reading from the N-terminus, the 94-residue chain is Viral macrophage inflammatory protein 2 (94 aa).

Residues Met1–Ser20 form the signal peptide. 2 cysteine pairs are disulfide-bonded: Cys34/Cys58 and Cys35/Cys74.

It belongs to the intercrine beta (chemokine CC) family. In terms of assembly, monomer. Interacts with human chemokine receptor CXCR4.

It localises to the secreted. Functionally, blocks infection by several different human immunodeficiency virus type 1 (HIV-1) strains. This occurs because vMIP-II binds to a wide range of chemokine receptors. May form part of the response to host defenses contributing to virus-induced neoplasia and may have relevance to KSHV and HIV-I interactions. This chain is Viral macrophage inflammatory protein 2 (ORF K4), found in Human herpesvirus 8 type P (isolate GK18) (HHV-8).